A 141-amino-acid chain; its full sequence is ATP synthase epsilon chain 1 (141 aa).

Belongs to the ATPase epsilon chain family. F-type ATPases have 2 components, CF(1) - the catalytic core - and CF(0) - the membrane proton channel. CF(1) has five subunits: alpha(3), beta(3), gamma(1), delta(1), epsilon(1). CF(0) has three main subunits: a, b and c.

It is found in the cell inner membrane. Produces ATP from ADP in the presence of a proton gradient across the membrane. This Paraburkholderia xenovorans (strain LB400) protein is ATP synthase epsilon chain 1.